The following is a 496-amino-acid chain: RNA-binding motif protein, Y chromosome, family 1 member D (496 aa).

The 78-residue stretch at Gly8–Lys85 folds into the RRM domain. 2 disordered regions span residues Asp67–Tyr349 and Lys452–Tyr496. 2 stretches are compositionally biased toward low complexity: residues Pro97 to Gly114 and Pro149 to Gly159. Residues Asn175–Met184 are compositionally biased toward polar residues. 6 stretches are compositionally biased toward basic and acidic residues: residues Arg204–Gly214, Asp242–Ser253, Ala276–Tyr289, Gly313–Tyr326, Ser335–Tyr349, and Gly484–Tyr496.

As to quaternary structure, interacts with splicing factor proteins SFRS3/SRP20, TRA2B/SFRS10, KHDRBS1/SAM68 and KHDRBS3. In terms of tissue distribution, testis-specific.

The protein resides in the nucleus. RNA-binding protein which may be involved in spermatogenesis. Required for sperm development, possibly by participating in pre-mRNA splicing in the testis. The polypeptide is RNA-binding motif protein, Y chromosome, family 1 member D (RBMY1D) (Homo sapiens (Human)).